Consider the following 195-residue polypeptide: FMN-dependent NADH:quinone oxidoreductase (195 aa).

Residues Ser-9, 15 to 17 (SVS), 85 to 88 (MYNF), and 129 to 132 (SRGG) each bind FMN.

This sequence belongs to the azoreductase type 1 family. In terms of assembly, homodimer. FMN is required as a cofactor.

It carries out the reaction 2 a quinone + NADH + H(+) = 2 a 1,4-benzosemiquinone + NAD(+). The enzyme catalyses N,N-dimethyl-1,4-phenylenediamine + anthranilate + 2 NAD(+) = 2-(4-dimethylaminophenyl)diazenylbenzoate + 2 NADH + 2 H(+). In terms of biological role, quinone reductase that provides resistance to thiol-specific stress caused by electrophilic quinones. Its function is as follows. Also exhibits azoreductase activity. Catalyzes the reductive cleavage of the azo bond in aromatic azo compounds to the corresponding amines. The sequence is that of FMN-dependent NADH:quinone oxidoreductase from Stenotrophomonas maltophilia (strain K279a).